The sequence spans 163 residues: 5-hydroxymethyl-dUMP N-hydrolase (163 aa).

Position 2 is an N-acetylalanine (Ala2). Position 16 (Gly16) interacts with 5-hydroxymethyl-dUMP. Ser17 carries the phosphoserine modification. 5-hydroxymethyl-dUMP-binding residues include Ile18, Arg19, Gly20, Ser87, Gly89, and Glu93. The residue at position 87 (Ser87) is a Phosphoserine. Phosphoserine is present on residues Ser112, Ser117, Ser127, and Ser158. Ser117 is a binding site for 5-hydroxymethyl-dUMP.

As to quaternary structure, monomer and homodimer. Highly expressed in heart, kidney, liver and spleen. Weakly expressed in lung and skeletal muscle.

The protein resides in the cytoplasm. Its subcellular location is the nucleus. It catalyses the reaction 5-hydroxymethyl-dUMP + H2O = 5-hydroxymethyluracil + 2-deoxy-D-ribose 5-phosphate. Functionally, part of a nucleotide salvage pathway that eliminates epigenetically modified 5-hydroxymethyl-dCMP (hmdCMP) in a two-step process entailing deamination to cytotoxic 5-hydroxymethyl-dUMP (hmdUMP), followed by its hydrolysis into 5-hydroxymethyluracil (hmU) and 2-deoxy-D-ribose 5-phosphate (deoxyribosephosphate). Catalyzes the second step in that pathway, the hydrolysis of the N-glycosidic bond in hmdUMP, degrading this cytotoxic nucleotide to avoid its genomic integration. In Rattus norvegicus (Rat), this protein is 5-hydroxymethyl-dUMP N-hydrolase.